We begin with the raw amino-acid sequence, 171 residues long: Co-chaperone protein HscB homolog (171 aa).

The 73-residue stretch at 2–74 (NHFELFGLPN…VSRAEYILSE (73 aa)) folds into the J domain.

Belongs to the HscB family. In terms of assembly, interacts with HscA and stimulates its ATPase activity.

Functionally, co-chaperone involved in the maturation of iron-sulfur cluster-containing proteins. Seems to help targeting proteins to be folded toward HscA. The chain is Co-chaperone protein HscB homolog from Aliivibrio fischeri (strain ATCC 700601 / ES114) (Vibrio fischeri).